The sequence spans 101 residues: Phosphoribosyl-AMP cyclohydrolase (101 aa).

Mg(2+) is bound at residue Asp71. Position 72 (Cys72) interacts with Zn(2+). Mg(2+) contacts are provided by Asp73 and Asp75. Cys88 and Cys95 together coordinate Zn(2+).

The protein belongs to the PRA-CH family. As to quaternary structure, homodimer. Mg(2+) is required as a cofactor. Requires Zn(2+) as cofactor.

Its subcellular location is the cytoplasm. It catalyses the reaction 1-(5-phospho-beta-D-ribosyl)-5'-AMP + H2O = 1-(5-phospho-beta-D-ribosyl)-5-[(5-phospho-beta-D-ribosylamino)methylideneamino]imidazole-4-carboxamide. Its pathway is amino-acid biosynthesis; L-histidine biosynthesis; L-histidine from 5-phospho-alpha-D-ribose 1-diphosphate: step 3/9. Functionally, catalyzes the hydrolysis of the adenine ring of phosphoribosyl-AMP. This is Phosphoribosyl-AMP cyclohydrolase from Bacillus cereus (strain 03BB102).